Consider the following 161-residue polypeptide: MASERKTKLSKNLLRMKFMQRGLDSETKKQLEEEERKMISDEHWYLDLPELKEKESFIVEEQSFSLCEDLLYGRMSFRGFNPEVEKLMLQMNSKNRAEAAEEDETVEVDVSDEEMARRYETLVGTIGKKFVKKRDRANYEEDENGTIKAIKPKKMFLKPQD.

Residues Lys37 and Lys86 each participate in a glycyl lysine isopeptide (Lys-Gly) (interchain with G-Cter in SUMO2) cross-link. Residue Ser111 is modified to Phosphoserine. The short motif at 117–134 is the Nuclear localization signal element; sequence RRYETLVGTIGKKFVKKR. Residues Lys128, Lys151, and Lys154 each participate in a glycyl lysine isopeptide (Lys-Gly) (interchain with G-Cter in SUMO2) cross-link.

The protein belongs to the MPP6 family. In terms of assembly, associates with the RNA exosome complex, mediated by EXOSC3. Interacts with ARHGAP18. Interacts with exosome cofactors EXOSC10 and MTREX. In terms of processing, phosphorylated in M (mitotic) phase.

It is found in the nucleus. Its subcellular location is the nucleolus. The protein resides in the cytoplasm. Its function is as follows. RNA-binding protein that associates with the RNA exosome complex. Involved in the 3'-processing of the 7S pre-RNA to the mature 5.8S rRNA and plays a role in recruiting the RNA exosome complex to pre-rRNA; this function may include C1D. This is M-phase phosphoprotein 6 from Mus musculus (Mouse).